We begin with the raw amino-acid sequence, 161 residues long: Globin CTT-VIIB-5/CTT-VIIB-9 (161 aa).

Residues 1-16 (MKFFAVLALCIVGAIA) form the signal peptide. In terms of domain architecture, Globin spans 18 to 161 (PLTADEASLV…NTFAIVVPRL (144 aa)). Heme b contacts are provided by histidine 76 and histidine 111.

This sequence belongs to the globin family. As to quaternary structure, homodimer.

The sequence is that of Globin CTT-VIIB-5/CTT-VIIB-9 (CTT-7B5) from Chironomus thummi thummi (Midge).